Consider the following 39-residue polypeptide: Gas vesicle protein C (39 aa).

This sequence belongs to the gas vesicle GvpC family.

Its subcellular location is the gas vesicle. In terms of biological role, confers stability, involved in shaping gas vesicles, hollow, gas filled proteinaceous nanostructures. During planktonic growth they allow positioning of the organism at a favorable depth for light or nutrient acquisition. The sequence is that of Gas vesicle protein C from Spirulina sp. (strain CCAP 1475/10).